A 71-amino-acid polypeptide reads, in one-letter code: uncharacterized protein (71 aa).

The Sm domain occupies 15-71 (PNFEYARRLNGKKVKIFLRNGEVLDAEVTGVSNYEIMVKVGDRNLLVFKHAIDYIEY).

This is an uncharacterized protein from Methanocaldococcus jannaschii (strain ATCC 43067 / DSM 2661 / JAL-1 / JCM 10045 / NBRC 100440) (Methanococcus jannaschii).